The following is a 302-amino-acid chain: Sulfate adenylyltransferase subunit 2 2 (302 aa).

Belongs to the PAPS reductase family. CysD subfamily. In terms of assembly, heterodimer composed of CysD, the smaller subunit, and CysN.

The catalysed reaction is sulfate + ATP + H(+) = adenosine 5'-phosphosulfate + diphosphate. It functions in the pathway sulfur metabolism; hydrogen sulfide biosynthesis; sulfite from sulfate: step 1/3. Its function is as follows. With CysN forms the ATP sulfurylase (ATPS) that catalyzes the adenylation of sulfate producing adenosine 5'-phosphosulfate (APS) and diphosphate, the first enzymatic step in sulfur assimilation pathway. APS synthesis involves the formation of a high-energy phosphoric-sulfuric acid anhydride bond driven by GTP hydrolysis by CysN coupled to ATP hydrolysis by CysD. This is Sulfate adenylyltransferase subunit 2 2 from Alkalilimnicola ehrlichii (strain ATCC BAA-1101 / DSM 17681 / MLHE-1).